A 370-amino-acid chain; its full sequence is Putative transposase InsL for insertion sequence element IS186A (370 aa).

Belongs to the transposase 11 family.

Involved in the transposition of the insertion sequence IS186. In Escherichia coli (strain K12), this protein is Putative transposase InsL for insertion sequence element IS186A (insL1).